The chain runs to 123 residues: Large ribosomal subunit protein eL8 (123 aa).

It belongs to the eukaryotic ribosomal protein eL8 family. Part of the 50S ribosomal subunit. Probably part of the RNase P complex.

Its subcellular location is the cytoplasm. Functionally, multifunctional RNA-binding protein that recognizes the K-turn motif in ribosomal RNA, the RNA component of RNase P, box H/ACA, box C/D and box C'/D' sRNAs. The polypeptide is Large ribosomal subunit protein eL8 (Thermococcus gammatolerans (strain DSM 15229 / JCM 11827 / EJ3)).